The following is a 500-amino-acid chain: Glycerol kinase (500 aa).

Residue T13 coordinates ADP. T13, T14, and S15 together coordinate ATP. Residue T13 participates in sn-glycerol 3-phosphate binding. An ADP-binding site is contributed by R17. R83, E84, Y135, and D244 together coordinate sn-glycerol 3-phosphate. Positions 83, 84, 135, 244, and 245 each coordinate glycerol. T266 and G309 together coordinate ADP. Residues T266, G309, Q313, and G410 each coordinate ATP. Positions 410 and 414 each coordinate ADP.

The protein belongs to the FGGY kinase family.

The enzyme catalyses glycerol + ATP = sn-glycerol 3-phosphate + ADP + H(+). It functions in the pathway polyol metabolism; glycerol degradation via glycerol kinase pathway; sn-glycerol 3-phosphate from glycerol: step 1/1. Its activity is regulated as follows. Inhibited by fructose 1,6-bisphosphate (FBP). Functionally, key enzyme in the regulation of glycerol uptake and metabolism. Catalyzes the phosphorylation of glycerol to yield sn-glycerol 3-phosphate. The sequence is that of Glycerol kinase from Burkholderia ambifaria (strain MC40-6).